The sequence spans 1598 residues: Serine/threonine-protein kinase Nek1 (1598 aa).

The 275-residue stretch at 106-380 folds into the Protein kinase domain; it reads YEVIRQIGAG…ALQCLGYTIF (275 aa). ATP contacts are provided by residues 112–120 and lysine 135; that span reads IGAGRFGEV. Aspartate 240 functions as the Proton acceptor in the catalytic mechanism.

This sequence belongs to the protein kinase superfamily. NEK Ser/Thr protein kinase family. NIMA subfamily.

Its subcellular location is the cytoplasm. The protein localises to the cytoskeleton. The protein resides in the microtubule organizing center. It is found in the centrosome. It localises to the spindle pole. It carries out the reaction L-seryl-[protein] + ATP = O-phospho-L-seryl-[protein] + ADP + H(+). It catalyses the reaction L-threonyl-[protein] + ATP = O-phospho-L-threonyl-[protein] + ADP + H(+). Its activity is regulated as follows. Phosphorylation status of the T-loop (amino acids 267-293) modulates kinase activity and subcellular localization of the protein. Probable serine/threonine-protein kinase. Involved in controlling centrosome splitting. Promotes separation of the centrosome outer cores. The chain is Serine/threonine-protein kinase Nek1 from Toxoplasma gondii (strain ATCC 50611 / Me49).